The following is a 182-amino-acid chain: Meiotic recombination protein REC104 (182 aa).

As to quaternary structure, interacts with REC114 and SPO11.

Functionally, potential transcriptional regulator that is required to activate expression of a number of early meiotic genes including HOP1. This Saccharomyces cerevisiae (strain ATCC 204508 / S288c) (Baker's yeast) protein is Meiotic recombination protein REC104 (REC104).